The primary structure comprises 216 residues: Urease accessory protein UreG (216 aa).

Residue 25-32 (GPVGSGKT) participates in GTP binding.

Belongs to the SIMIBI class G3E GTPase family. UreG subfamily. Homodimer. UreD, UreF and UreG form a complex that acts as a GTP-hydrolysis-dependent molecular chaperone, activating the urease apoprotein by helping to assemble the nickel containing metallocenter of UreC. The UreE protein probably delivers the nickel.

The protein localises to the cytoplasm. Facilitates the functional incorporation of the urease nickel metallocenter. This process requires GTP hydrolysis, probably effectuated by UreG. This Burkholderia thailandensis (strain ATCC 700388 / DSM 13276 / CCUG 48851 / CIP 106301 / E264) protein is Urease accessory protein UreG.